Consider the following 525-residue polypeptide: D-3-phosphoglycerate dehydrogenase (525 aa).

Residues 148–149, aspartate 168, threonine 200, 227–229, and aspartate 253 each bind NAD(+); these read RI and CAR. Residue arginine 229 is part of the active site. Glutamate 258 is a catalytic residue. The Proton donor role is filled by histidine 276. 276 to 279 is a binding site for NAD(+); it reads HLGA. One can recognise an ACT domain in the interval 452–524; that stretch reads LVYIQHQDTT…DIVSVKLIDL (73 aa).

It belongs to the D-isomer specific 2-hydroxyacid dehydrogenase family.

It carries out the reaction (2R)-3-phosphoglycerate + NAD(+) = 3-phosphooxypyruvate + NADH + H(+). The enzyme catalyses (R)-2-hydroxyglutarate + NAD(+) = 2-oxoglutarate + NADH + H(+). It participates in amino-acid biosynthesis; L-serine biosynthesis; L-serine from 3-phospho-D-glycerate: step 1/3. In bacteria displays feedback inhibition by L-serine. In terms of biological role, catalyzes the reversible oxidation of 3-phospho-D-glycerate to 3-phosphonooxypyruvate, the first step of the phosphorylated L-serine biosynthesis pathway. Also catalyzes the reversible oxidation of 2-hydroxyglutarate to 2-oxoglutarate. The sequence is that of D-3-phosphoglycerate dehydrogenase (serA) from Bacillus subtilis (strain 168).